The sequence spans 393 residues: Bifunctional enzyme Fae/Hps (393 aa).

The tract at residues 1–161 (MYLIGEALIG…HEKDRAAHAV (161 aa)) is formaldehyde-activating enzyme. Catalysis depends on H17, which acts as the Proton donor. The substrate site is built by D19, L48, K66, T68, and Q83. The 3-hexulose-6-phosphate synthase stretch occupies residues 162–393 (MGFKVPRLWD…IDQFRIMTDF (232 aa)).

It in the N-terminal section; belongs to the formaldehyde-activating enzyme family. In the C-terminal section; belongs to the HPS/KGPDC family. HPS subfamily.

It catalyses the reaction 5,6,7,8-tetrahydromethanopterin + formaldehyde = 5,10-methylenetetrahydromethanopterin + H2O. It carries out the reaction D-ribulose 5-phosphate + formaldehyde = D-arabino-hex-3-ulose 6-phosphate. Its pathway is carbohydrate biosynthesis; D-ribose 5-phosphate biosynthesis. Functionally, catalyzes the condensation of formaldehyde with tetrahydromethanopterin (H(4)MPT) to 5,10-methylenetetrahydromethanopterin. In terms of biological role, catalyzes the reversible formation of ribulose-5-phosphate and formaldehyde from 3-hexulose-6-phosphate. This chain is Bifunctional enzyme Fae/Hps, found in Methanospirillum hungatei JF-1 (strain ATCC 27890 / DSM 864 / NBRC 100397 / JF-1).